We begin with the raw amino-acid sequence, 106 residues long: Large ribosomal subunit protein uL23 (106 aa).

It belongs to the universal ribosomal protein uL23 family. As to quaternary structure, part of the 50S ribosomal subunit. Contacts protein L29, and trigger factor when it is bound to the ribosome.

Functionally, one of the early assembly proteins it binds 23S rRNA. One of the proteins that surrounds the polypeptide exit tunnel on the outside of the ribosome. Forms the main docking site for trigger factor binding to the ribosome. The chain is Large ribosomal subunit protein uL23 from Neisseria gonorrhoeae (strain ATCC 700825 / FA 1090).